The primary structure comprises 213 residues: Putative 3-methyladenine DNA glycosylase (213 aa).

It belongs to the DNA glycosylase MPG family.

The chain is Putative 3-methyladenine DNA glycosylase from Latilactobacillus sakei subsp. sakei (strain 23K) (Lactobacillus sakei subsp. sakei).